We begin with the raw amino-acid sequence, 458 residues long: ATP synthase subunit beta (458 aa).

148-155 contributes to the ATP binding site; it reads GGAGVGKT.

This sequence belongs to the ATPase alpha/beta chains family. As to quaternary structure, F-type ATPases have 2 components, CF(1) - the catalytic core - and CF(0) - the membrane proton channel. CF(1) has five subunits: alpha(3), beta(3), gamma(1), delta(1), epsilon(1). CF(0) has three main subunits: a(1), b(2) and c(9-12). The alpha and beta chains form an alternating ring which encloses part of the gamma chain. CF(1) is attached to CF(0) by a central stalk formed by the gamma and epsilon chains, while a peripheral stalk is formed by the delta and b chains.

Its subcellular location is the cell inner membrane. It carries out the reaction ATP + H2O + 4 H(+)(in) = ADP + phosphate + 5 H(+)(out). Produces ATP from ADP in the presence of a proton gradient across the membrane. The catalytic sites are hosted primarily by the beta subunits. This is ATP synthase subunit beta from Shewanella pealeana (strain ATCC 700345 / ANG-SQ1).